Reading from the N-terminus, the 278-residue chain is MATH domain and coiled-coil domain-containing protein At1g31400 (278 aa).

An MATH domain is found at 6–131 (EKRITWTIKN…SGQVKIVAEV (126 aa)). Residues 232 to 267 (KLDWLEKKLKEVGKTRMQQLEQNLKDLKESLCWSSD) are a coiled coil.

The sequence is that of MATH domain and coiled-coil domain-containing protein At1g31400 from Arabidopsis thaliana (Mouse-ear cress).